The following is a 296-amino-acid chain: tRNA dimethylallyltransferase (296 aa).

2-9 serves as a coordination point for ATP; sequence GPTASGKT. Residue 4-9 coordinates substrate; it reads TASGKT. 3 interaction with substrate tRNA regions span residues 27–30, 151–155, and 232–237; these read DSAL, QRLSR, and RCVGYR.

It belongs to the IPP transferase family. Monomer. Mg(2+) serves as cofactor.

It catalyses the reaction adenosine(37) in tRNA + dimethylallyl diphosphate = N(6)-dimethylallyladenosine(37) in tRNA + diphosphate. Catalyzes the transfer of a dimethylallyl group onto the adenine at position 37 in tRNAs that read codons beginning with uridine, leading to the formation of N6-(dimethylallyl)adenosine (i(6)A). In Shewanella sp. (strain ANA-3), this protein is tRNA dimethylallyltransferase.